The chain runs to 179 residues: MILMPKKKVKKFRGSRTFGWGSHKNRRGRGNRGGAGNAGVHKHKYIKFVKLAKKGEYLFGKHGFTRPKILRKDYLNVQAVKETLRWLKEEGKLDDYTYRYLYSRPELNAGDLDEIIDRLASLGLAEKEGDVYRIDLAELGYSKLLGSGKVTRKMEVKVFEATPKAVEKIEAAGGKVVAE.

This sequence belongs to the universal ribosomal protein uL15 family. In terms of assembly, part of the 50S ribosomal subunit.

Functionally, binds to the 23S rRNA. The chain is Large ribosomal subunit protein uL15 from Archaeoglobus fulgidus (strain ATCC 49558 / DSM 4304 / JCM 9628 / NBRC 100126 / VC-16).